The following is a 210-amino-acid chain: MRDPVETYMNLVPMVVEQTNRGERAYDIFSRLLKERIIFVTGPVEDGMSTLIVAQLLFLEAENPKKEISMYINSPGGVVTSGLAIYDTMQFIRPPVSTLCTGQAASMGSLLLAAGEKDMRFSLPNSRIMVHQPSGGFQGQATDIMLHAQEILNLKKRLNEIYVKHTGQSYQAIEDALERDNFLTAEKARDFGIVDKVIDKRPEDPVAKAA.

Catalysis depends on Ser106, which acts as the Nucleophile. The active site involves His131.

This sequence belongs to the peptidase S14 family. As to quaternary structure, fourteen ClpP subunits assemble into 2 heptameric rings which stack back to back to give a disk-like structure with a central cavity, resembling the structure of eukaryotic proteasomes.

It is found in the cytoplasm. The enzyme catalyses Hydrolysis of proteins to small peptides in the presence of ATP and magnesium. alpha-casein is the usual test substrate. In the absence of ATP, only oligopeptides shorter than five residues are hydrolyzed (such as succinyl-Leu-Tyr-|-NHMec, and Leu-Tyr-Leu-|-Tyr-Trp, in which cleavage of the -Tyr-|-Leu- and -Tyr-|-Trp bonds also occurs).. Its function is as follows. Cleaves peptides in various proteins in a process that requires ATP hydrolysis. Has a chymotrypsin-like activity. Plays a major role in the degradation of misfolded proteins. The polypeptide is ATP-dependent Clp protease proteolytic subunit (Afipia carboxidovorans (strain ATCC 49405 / DSM 1227 / KCTC 32145 / OM5) (Oligotropha carboxidovorans)).